The primary structure comprises 480 residues: Oxysterol-binding protein-related protein 2 (480 aa).

The interval 1–60 (MNGEEEFFDAVTGFDSDNSSGEFSEANQKVTGMIDLDTSKNNRIGKTGERPSQENGIQKH) is disordered. Residues 15-30 (DSDNSSGEFSEANQKV) are compositionally biased toward polar residues. A phosphoserine mark is found at Ser19 and Ser20. Residues Lys90, 178–179 (HH), and 427–431 (EEKQR) each bind a 1,2-diacyl-sn-glycero-3-phospho-(1D-myo-inositol-4,5-bisphosphate).

Belongs to the OSBP family. In terms of assembly, monomer. Homotetramer; phosphatidylinositol-4,5-bisphosphate binding promotes formation of stable tetramers. Interacts with DIAPH1. In terms of tissue distribution, widely expressed.

The protein resides in the cytoplasm. It is found in the cytosol. It localises to the lipid droplet. Its subcellular location is the cell membrane. Functionally, intracellular transport protein that binds sterols and phospholipids and mediates lipid transport between intracellular compartments. Increases plasma membrane cholesterol levels and decreases phosphatidylinositol-4,5-bisphosphate levels in the cell membrane. Binds phosphoinositides, such as phosphatidylinositol-4,5-bisphosphate. Exhibits strong binding to phosphatidic acid and weak binding to phosphatidylinositol 3-phosphate. Binds cholesterol, dehydroergosterol, 22(R)-hydroxycholesterol and 25-hydroxycholesterol (in vitro). The sequence is that of Oxysterol-binding protein-related protein 2 (OSBPL2) from Homo sapiens (Human).